The sequence spans 577 residues: Probable ATP-dependent RNA helicase DDX55 homolog (577 aa).

The Q motif motif lies at 7–37 (AVATKTYREKLGPEILEVFDKSYKSFTDVQV). Positions 40-218 (GTHLLNLSDV…VFGLRNAKQV (179 aa)) constitute a Helicase ATP-binding domain. 53–60 (SPTGSGKT) contacts ATP. The DEAD box signature appears at 166-169 (DEAD). The region spanning 231–393 (TLKNYFVECP…EVKVPTSTSR (163 aa)) is the Helicase C-terminal domain. Positions 508–577 (AKEKKRREKE…LSKKEIKDVL (70 aa)) are disordered. A compositionally biased stretch (basic residues) spans 510-530 (EKKRREKEARKMKRAGGRFKS).

It belongs to the DEAD box helicase family. DDX55/SPB4 subfamily.

The catalysed reaction is ATP + H2O = ADP + phosphate + H(+). In terms of biological role, probable ATP-binding RNA helicase. This is Probable ATP-dependent RNA helicase DDX55 homolog from Caenorhabditis briggsae.